A 567-amino-acid chain; its full sequence is Glutamine-dependent NAD(+) synthetase (567 aa).

The CN hydrolase domain maps to 2–242; sequence LNLTLAQLNF…EDILTVTLDL (241 aa). Glu41 serves as the catalytic Proton acceptor; for glutaminase activity. Lys109 functions as the For glutaminase activity in the catalytic mechanism. Residue Tyr115 participates in L-glutamine binding. Residue Cys145 is the Nucleophile; for glutaminase activity of the active site. 2 residues coordinate L-glutamine: Ser172 and Lys178. Residues 287–567 are ligase; it reads PKEEEEIYAA…RMPVTNKFFK (281 aa). 316 to 323 lines the ATP pocket; that stretch reads GLSGGIDS. Asn399 is a binding site for deamido-NAD(+). Thr423 is an ATP binding site. 2 residues coordinate deamido-NAD(+): Glu428 and Lys538.

This sequence in the C-terminal section; belongs to the NAD synthetase family.

It catalyses the reaction deamido-NAD(+) + L-glutamine + ATP + H2O = L-glutamate + AMP + diphosphate + NAD(+) + H(+). The protein operates within cofactor biosynthesis; NAD(+) biosynthesis; NAD(+) from deamido-NAD(+) (L-Gln route): step 1/1. In terms of biological role, catalyzes the ATP-dependent amidation of deamido-NAD to form NAD. Uses L-glutamine as a nitrogen source. The protein is Glutamine-dependent NAD(+) synthetase of Aquifex aeolicus (strain VF5).